A 258-amino-acid polypeptide reads, in one-letter code: Probable succinate transporter subunit YjjP (258 aa).

5 consecutive transmembrane segments (helical) span residues tyrosine 116 to asparagine 137, alanine 143 to leucine 160, phenylalanine 171 to phenylalanine 191, isoleucine 197 to alanine 217, and tryptophan 231 to methionine 251.

Belongs to the ThrE exporter (TC 2.A.79) family. As to quaternary structure, the transporter is composed of YjjB and YjjP.

Its subcellular location is the cell inner membrane. Involved in succinate export with YjjB. Both proteins are required for export. Participates in succinate export, but also in the export of other dicarboxylates, such as fumarate and malate. Contributes to succinate production under both aerobic and anaerobic conditions, and increases fumarate and malate production during anaerobic succinate production. The sequence is that of Probable succinate transporter subunit YjjP from Klebsiella aerogenes (strain ATCC 13048 / DSM 30053 / CCUG 1429 / JCM 1235 / KCTC 2190 / NBRC 13534 / NCIMB 10102 / NCTC 10006 / CDC 819-56) (Enterobacter aerogenes).